The primary structure comprises 302 residues: Ornithine carbamoyltransferase (302 aa).

Carbamoyl phosphate contacts are provided by residues 52 to 55, Gln-79, Arg-103, and 130 to 133; these read STRT and HPCQ. L-ornithine-binding positions include Asn-161, Asp-221, and 225–226; that span reads SM. Carbamoyl phosphate-binding positions include 261 to 262 and Arg-289; that span reads CL.

It belongs to the aspartate/ornithine carbamoyltransferase superfamily. OTCase family.

Its subcellular location is the cytoplasm. It carries out the reaction carbamoyl phosphate + L-ornithine = L-citrulline + phosphate + H(+). It functions in the pathway amino-acid biosynthesis; L-arginine biosynthesis; L-arginine from L-ornithine and carbamoyl phosphate: step 1/3. Functionally, reversibly catalyzes the transfer of the carbamoyl group from carbamoyl phosphate (CP) to the N(epsilon) atom of ornithine (ORN) to produce L-citrulline. This Syntrophotalea carbinolica (strain DSM 2380 / NBRC 103641 / GraBd1) (Pelobacter carbinolicus) protein is Ornithine carbamoyltransferase.